Reading from the N-terminus, the 309-residue chain is Protein FdhE (309 aa).

The protein belongs to the FdhE family.

The protein localises to the cytoplasm. Functionally, necessary for formate dehydrogenase activity. The protein is Protein FdhE of Salmonella choleraesuis (strain SC-B67).